Reading from the N-terminus, the 747-residue chain is Potassium transporter 20 (747 aa).

Residues 1-47 (MSVQEDDDAAGPEVDRLRRHDSFYGDAEKVSNDKSHGTGENWARTLQ) lie on the Cytoplasmic side of the membrane. A helical membrane pass occupies residues 48-68 (LAFQSIGVVYGDVGTSPLYVY). The Extracellular segment spans residues 69–84 (SSTFPDGVKHPDDLVG). A helical transmembrane segment spans residues 85–105 (VLSLMLYTLILIPMVKYVFIV). Residues 106-171 (LYANDNGDGG…QKLESSNAAK (66 aa)) are Cytoplasmic-facing. A helical membrane pass occupies residues 172–192 (IALFTITILGTSMVMGDGTLT). Topologically, residues 193 to 209 (PAISVLSAVSGIREKAP) are extracellular. The chain crosses the membrane as a helical span at residues 210-230 (SLTQLQVVWISVPILIVLFSV). Topologically, residues 231–237 (QRFGTDK) are cytoplasmic. A helical membrane pass occupies residues 238–258 (VGYSFAPVISVWFVLIAGIGA). Topologically, residues 259–288 (YNLAVHEITILRAFNPMYIIDYFRRNGKEA) are extracellular. The chain crosses the membrane as a helical span at residues 289–309 (WVSLGGAVLCITGTEAMFADL). The Cytoplasmic portion of the chain corresponds to 310–318 (GHFNIRAIQ). A helical membrane pass occupies residues 319–339 (LSFTCVLFPSVALCYMGQAAY). The Extracellular portion of the chain corresponds to 340–353 (LRKFPEDVGDTFYK). The helical transmembrane segment at 354–374 (SLPAPLFWPVFVVAIMAAIIA) threads the bilayer. Over 375–410 (SQAMLSGAFAILSKALPLGCFPRVEVVHTSNKYEGQ) the chain is Cytoplasmic. Residues 411–431 (VYIPEVNFLIGVASVAITVAF) traverse the membrane as a helical segment. Residues 432–442 (QTTANIGNAYG) lie on the Extracellular side of the membrane. The chain crosses the membrane as a helical span at residues 443 to 463 (ICVVMVFSITTHLMTVVMLLI). Residues 464–469 (WKVRLP) are Cytoplasmic-facing. A helical transmembrane segment spans residues 470 to 490 (FIAAFYVVFTFTEFLYLSSIL). Residues 491–496 (SKFAEG) lie on the Extracellular side of the membrane. Residues 497–517 (GYLPFCFSLVLMALMATWHYV) traverse the membrane as a helical segment. Topologically, residues 518 to 747 (HVKRYWYELD…LLKVGITYEI (230 aa)) are cytoplasmic.

It belongs to the HAK/KUP transporter (TC 2.A.72.3) family.

The protein localises to the membrane. Its function is as follows. High-affinity potassium transporter. This Oryza sativa subsp. japonica (Rice) protein is Potassium transporter 20 (HAK20).